Here is a 391-residue protein sequence, read N- to C-terminus: 1-deoxy-D-xylulose 5-phosphate reductoisomerase (391 aa).

T10, G11, S12, I13, N38, and N122 together coordinate NADPH. K123 contributes to the 1-deoxy-D-xylulose 5-phosphate binding site. Position 124 (E124) interacts with NADPH. Position 148 (D148) interacts with Mn(2+). Residues S149, E150, S173, and H196 each contribute to the 1-deoxy-D-xylulose 5-phosphate site. E150 contacts Mn(2+). G202 contributes to the NADPH binding site. 1-deoxy-D-xylulose 5-phosphate-binding residues include S209, N214, K215, and E218. E218 is a binding site for Mn(2+).

Belongs to the DXR family. It depends on Mg(2+) as a cofactor. Mn(2+) is required as a cofactor.

It catalyses the reaction 2-C-methyl-D-erythritol 4-phosphate + NADP(+) = 1-deoxy-D-xylulose 5-phosphate + NADPH + H(+). It functions in the pathway isoprenoid biosynthesis; isopentenyl diphosphate biosynthesis via DXP pathway; isopentenyl diphosphate from 1-deoxy-D-xylulose 5-phosphate: step 1/6. Its function is as follows. Catalyzes the NADPH-dependent rearrangement and reduction of 1-deoxy-D-xylulose-5-phosphate (DXP) to 2-C-methyl-D-erythritol 4-phosphate (MEP). The sequence is that of 1-deoxy-D-xylulose 5-phosphate reductoisomerase from Wolbachia pipientis subsp. Culex pipiens (strain wPip).